A 669-amino-acid polypeptide reads, in one-letter code: Very long-chain fatty acid transport protein (669 aa).

Residues 1 to 5 lie on the Cytoplasmic side of the membrane; sequence MSPIQ. A helical transmembrane segment spans residues 6–26; sequence VVVFALSRIFLLLFRLIKLII. Over 27-148 the chain is Extracellular; sequence TPIQKSLGYL…YVAIDCTNKP (122 aa). A helical membrane pass occupies residues 149 to 169; that stretch reads LFVFLWLSLWNIGAIPAFLNY. Residues 170–270 are Cytoplasmic-facing; the sequence is NTKGTPLVHS…TGLPKSAIMS (101 aa). 256–267 serves as a coordination point for ATP; sequence YTSGTTGLPKSA. The stretch at 271-339 is an intramembrane region; that stretch reads WRKSSVGCQV…FWKQVYLTGA (69 aa). At 340–669 the chain is on the cytoplasmic side; that stretch reads THIQYVGEVC…EAIDAQTIKL (330 aa). The short motif at 501–551 is the FACS element; the sequence is DAWYRCGDLLKADEYGLWYFLDRMGDTFRWKSENVSTTEVEDQLTASNKEQ. Residues 667–669 carry the C-terminal peroxisome targeting signal (PTS1) motif; the sequence is IKL.

The protein belongs to the ATP-dependent AMP-binding enzyme family. In terms of assembly, interacts with fatty acyl-CoA synthetases FAA1 and FAA4.

The protein resides in the lipid droplet. It localises to the cell membrane. The protein localises to the peroxisome membrane. It is found in the peroxisome. It catalyses the reaction a very long-chain fatty acid + ATP + CoA = a very long-chain fatty acyl-CoA + AMP + diphosphate. The catalysed reaction is tetracosanoate + ATP + CoA = tetracosanoyl-CoA + AMP + diphosphate. Its function is as follows. Acyl-CoA synthetase required for both the import of long chain fatty acids (LCFAs) (C14-C18) and the activation very long chain fatty acids (VLCFAs) (C20-C26) by esterification of the fatty acids into metabolically active CoA-thioesters for subsequent degradation or incorporation into phospholipids. The transport and fatty acyl-CoA synthetase activities are genetically separable and are thus independent activities. Esterifies VLCFAs in the peroxisome matrix. The VLCFAs are actively transported into peroxisomes by a PXA1-PXA2 heterodimeric transporter in the peroxisomal membrane. The protein is Very long-chain fatty acid transport protein (FAT1) of Saccharomyces cerevisiae (strain ATCC 204508 / S288c) (Baker's yeast).